A 355-amino-acid chain; its full sequence is Phosphoribosylformylglycinamidine cyclo-ligase (355 aa).

The protein belongs to the AIR synthase family.

It localises to the cytoplasm. The catalysed reaction is 2-formamido-N(1)-(5-O-phospho-beta-D-ribosyl)acetamidine + ATP = 5-amino-1-(5-phospho-beta-D-ribosyl)imidazole + ADP + phosphate + H(+). Its pathway is purine metabolism; IMP biosynthesis via de novo pathway; 5-amino-1-(5-phospho-D-ribosyl)imidazole from N(2)-formyl-N(1)-(5-phospho-D-ribosyl)glycinamide: step 2/2. The chain is Phosphoribosylformylglycinamidine cyclo-ligase from Beijerinckia indica subsp. indica (strain ATCC 9039 / DSM 1715 / NCIMB 8712).